The sequence spans 538 residues: MKAFSVTCLGFAVFSSSICVNINILQQIGYIKQQVRQLSYYSQSSSSYIVVKLLPNIQPTDNSCEFKSVTQYNKTLSNLLLPIAENINNIASPSPGSRRHKRFAGIAIGIAALGVATAAQVTAAVSLVQAQTNARAIAAMKNSIQATNRAIFEVKEGTQQLAIAVQAIQDHINTIMNTQLNNMSCQILDNQLATYLGLYLTELTTVFQPQLINPALSPISIQALRSLLGSMTPAVVQATLSTSISAAEILSAGLMEGQIVSVLLDEMQMIVKINIPTIVTQSNALVIDFYSISSFINNQESIIQLPDRILEIGNEQWSYPAKNCKLTRHHIFCQYNEAERLSLESKLCLAGNISACVFSPIAGSYMRRFVALDGTIVANCRSLTCLCKSPSYPIYQPDHHAVTTIDLTTCQTLSLDGLDFSIVSLSNITYAENLTISLSQTINTQPIDISTELSKVNASLQNAVKYIKESNHQLQSVSVNSKIGAIIVAALVLSILSIIISLLFCCWAYIATKEIRRINFKTNHINTISSSVDDLIRY.

A signal peptide spans 1 to 19 (MKAFSVTCLGFAVFSSSIC). Residues 20–486 (VNINILQQIG…VSVNSKIGAI (467 aa)) lie on the Extracellular side of the membrane. N-linked (GlcNAc...) asparagine; by host glycosylation is found at Asn-56 and Asn-73. Positions 103–127 (FAGIAIGIAALGVATAAQVTAAVSL) are fusion peptide. Residues 128–156 (VQAQTNARAIAAMKNSIQATNRAIFEVKE) are a coiled coil. Asn-182 carries N-linked (GlcNAc...) asparagine; by host glycosylation. 4 disulfides stabilise this stretch: Cys-324-Cys-333, Cys-348-Cys-356, Cys-380-Cys-385, and Cys-387-Cys-410. An N-linked (GlcNAc...) asparagine; by host glycan is attached at Asn-352. Residues Asn-427, Asn-433, and Asn-457 are each glycosylated (N-linked (GlcNAc...) asparagine; by host). A coiled-coil region spans residues 452-477 (ELSKVNASLQNAVKYIKESNHQLQSV). Residues 487–507 (IVAALVLSILSIIISLLFCCW) traverse the membrane as a helical segment. The Cytoplasmic segment spans residues 508 to 538 (AYIATKEIRRINFKTNHINTISSSVDDLIRY).

Belongs to the paramyxoviruses fusion glycoprotein family. As to quaternary structure, homotrimer; disulfide-linked F1-F2. Interacts with host LAMP1; LAMP2 and LAMP3; these interactions promote the cleavage of the viral fusion protein F. The inactive precursor F0 is glycosylated and proteolytically cleaved into F1 and F2 to be functionally active. The cleavage is mediated by cellular proteases including host FURIN during the transport and maturation of the polypeptide.

Its subcellular location is the virion membrane. It is found in the host cell membrane. Class I viral fusion protein. Under the current model, the protein has at least 3 conformational states: pre-fusion native state, pre-hairpin intermediate state, and post-fusion hairpin state. During viral and plasma cell membrane fusion, the heptad repeat (HR) regions assume a trimer-of-hairpins structure, positioning the fusion peptide in close proximity to the C-terminal region of the ectodomain. The formation of this structure appears to drive apposition and subsequent fusion of viral and plasma cell membranes. Directs fusion of viral and cellular membranes leading to delivery of the nucleocapsid into the cytoplasm. This fusion is pH independent and occurs directly at the outer cell membrane. The trimer of F1-F2 (F protein) probably interacts with HN at the virion surface. Upon HN binding to its cellular receptor, the hydrophobic fusion peptide is unmasked and interacts with the cellular membrane, inducing the fusion between cell and virion membranes. Later in infection, F proteins expressed at the plasma membrane of infected cells could mediate fusion with adjacent cells to form syncytia, a cytopathic effect that could lead to tissue necrosis. The polypeptide is Fusion glycoprotein F0 (F) (Mumps virus (strain RW) (MuV)).